Here is a 294-residue protein sequence, read N- to C-terminus: Cytidine deaminase (294 aa).

CMP/dCMP-type deaminase domains lie at 48-168 (DEDA…FGPK) and 186-294 (LTGD…VLLG). 89–91 (NME) serves as a coordination point for substrate. His102 contributes to the Zn(2+) binding site. Glu104 acts as the Proton donor in catalysis. Cys129 and Cys132 together coordinate Zn(2+).

This sequence belongs to the cytidine and deoxycytidylate deaminase family. In terms of assembly, homodimer. Zn(2+) is required as a cofactor.

It catalyses the reaction cytidine + H2O + H(+) = uridine + NH4(+). The catalysed reaction is 2'-deoxycytidine + H2O + H(+) = 2'-deoxyuridine + NH4(+). Its function is as follows. This enzyme scavenges exogenous and endogenous cytidine and 2'-deoxycytidine for UMP synthesis. In Salmonella paratyphi A (strain ATCC 9150 / SARB42), this protein is Cytidine deaminase.